Reading from the N-terminus, the 129-residue chain is Mediator of RNA polymerase II transcription subunit 31-B (129 aa).

The protein belongs to the Mediator complex subunit 31 family. Component of the Mediator complex.

It localises to the nucleus. Its function is as follows. Component of the Mediator complex, a coactivator involved in the regulated transcription of nearly all RNA polymerase II-dependent genes. Mediator functions as a bridge to convey information from gene-specific regulatory proteins to the basal RNA polymerase II transcription machinery. Mediator is recruited to promoters by direct interactions with regulatory proteins and serves as a scaffold for the assembly of a functional preinitiation complex with RNA polymerase II and the general transcription factors. The protein is Mediator of RNA polymerase II transcription subunit 31-B (med31-b) of Xenopus laevis (African clawed frog).